We begin with the raw amino-acid sequence, 952 residues long: UvrABC system protein A (952 aa).

31 to 38 lines the ATP pocket; the sequence is GVSGSGKS. The segment at 253–280 adopts a C4-type zinc-finger fold; that stretch reads CPEHGSVLEELEPRIFSFNSPYGACPAC. ABC transporter domains follow at residues 309–591 and 611–938; these read WSRG…PQSL and GNGK…AFLA. Residue 643 to 650 participates in ATP binding; sequence GPSGSGKS. Residues 742 to 768 form a C4-type zinc finger; sequence CEACGGDGTVKIEMLFLPDLYVPCEVC.

The protein belongs to the ABC transporter superfamily. UvrA family. In terms of assembly, forms a heterotetramer with UvrB during the search for lesions.

The protein localises to the cytoplasm. Functionally, the UvrABC repair system catalyzes the recognition and processing of DNA lesions. UvrA is an ATPase and a DNA-binding protein. A damage recognition complex composed of 2 UvrA and 2 UvrB subunits scans DNA for abnormalities. When the presence of a lesion has been verified by UvrB, the UvrA molecules dissociate. This is UvrABC system protein A from Thermus thermophilus (strain ATCC 27634 / DSM 579 / HB8).